The primary structure comprises 388 residues: MGKKAVHFGGGNIGRGFVGEFLHESDYEVVFVDVMDSIIDALQGASSYKVTEVSNEGEHTKTVTNYRAINSKHNLDQVISEISTADVVTCAVGPNILKFIAPPIAKGIDARTIERPLAVVACENAIGATDTLHKFVKENTDPSRVESLSSRARFANSAIDRIVPTQDPDSGLDVKIEKFYEWVVEKTPFGEWGHPDIQAILWVDNLDPYIERKLYTVNTGHATAAYYGYNMGKKTIYESMSDEKIRGHVRDALSETSTLIVDKYGIPAQEQRKYVDAIVARISNPHLEDVVERVGRAPLRKLGRKERFVGPASQLAERGKKVDALLGAMEQALRFQNVLEDDESFELAKILKTESAEDATAKLTGLESDHPLFARVVERVAKVQKGPK.

NAD(+) is bound at residue 5–16; that stretch reads AVHFGGGNIGRG. Residue lysine 213 is part of the active site.

This sequence belongs to the mannitol dehydrogenase family. As to quaternary structure, monomer.

It carries out the reaction D-mannitol 1-phosphate + NAD(+) = beta-D-fructose 6-phosphate + NADH + H(+). Its function is as follows. Catalyzes the NAD(H)-dependent interconversion of D-fructose 6-phosphate and D-mannitol 1-phosphate in the mannitol metabolic pathway. The chain is Mannitol-1-phosphate 5-dehydrogenase from Coccidioides immitis (strain RS) (Valley fever fungus).